A 294-amino-acid chain; its full sequence is rRNA 2'-O-methyltransferase fibrillarin (294 aa).

Residues 1–62 form a disordered region; it reads MGKDFKSGGG…GKFGAKGPRG (62 aa). Gly residues predominate over residues 20 to 56; sequence GPGGPGGRPFNKGPGGPGGPGGKFGGGRPGGPGGKFG. Residues Arg27, Arg47, and Arg61 each carry the asymmetric dimethylarginine modification. S-adenosyl-L-methionine-binding positions include 151–152, 170–171, 195–196, and 215–218; these read TT, EF, DA, and DVAQ.

The protein belongs to the methyltransferase superfamily. Fibrillarin family. Component of box C/D small nucleolar ribonucleoprotein (snoRNP) particles. It is associated with the U3, U8 and U13 small nuclear RNAs. By homology to other fibrillarins, some or all of the N-terminal domain arginines are modified to asymmetric dimethylarginine (DMA).

It is found in the nucleus. Its subcellular location is the nucleolus. The enzyme catalyses L-glutaminyl-[histone H2A] + S-adenosyl-L-methionine = N(5)-methyl-L-glutaminyl-[histone H2A] + S-adenosyl-L-homocysteine + H(+). In terms of biological role, S-adenosyl-L-methionine-dependent methyltransferase that has the ability to methylate both RNAs and proteins. Involved in pre-rRNA processing. Utilizes the methyl donor S-adenosyl-L-methionine to catalyze the site-specific 2'-hydroxyl methylation of ribose moieties in pre-ribosomal RNA. Site specificity is provided by a guide RNA that base pairs with the substrate. Methylation occurs at a characteristic distance from the sequence involved in base pairing with the guide RNA. Also acts as a protein methyltransferase by mediating methylation of 'Gln-105' of histone H2A (H2AQ105me), a modification that impairs binding of the FACT complex and is specifically present at 35S ribosomal DNA locus. This Tetrahymena thermophila protein is rRNA 2'-O-methyltransferase fibrillarin (FIB).